The following is a 294-amino-acid chain: 33 kDa chaperonin (294 aa).

2 disulfides stabilise this stretch: Cys-231–Cys-233 and Cys-264–Cys-267.

It belongs to the HSP33 family. In terms of processing, under oxidizing conditions two disulfide bonds are formed involving the reactive cysteines. Under reducing conditions zinc is bound to the reactive cysteines and the protein is inactive.

The protein resides in the cytoplasm. Redox regulated molecular chaperone. Protects both thermally unfolding and oxidatively damaged proteins from irreversible aggregation. Plays an important role in the bacterial defense system toward oxidative stress. This chain is 33 kDa chaperonin, found in Aeromonas salmonicida (strain A449).